The chain runs to 356 residues: Popeye domain-containing protein 1 (356 aa).

Residues 1 to 48 are Extracellular-facing; the sequence is MNFTEPSPLAQSTVVGFLPELESLTPVPSNETSCENWREVHHLVFHAA. 2 N-linked (GlcNAc...) asparagine glycosylation sites follow: asparagine 2 and asparagine 30. The helical transmembrane segment at 49–69 threads the bilayer; it reads NVCFAVGLLIPTTLHLHMILL. Arginine 70 is a topological domain (cytoplasmic). The helical transmembrane segment at 71–91 threads the bilayer; that stretch reads VMLSIGCTLYVVWATLYRCAL. A topological domain (extracellular) is located at residue aspartate 92. Residues 93–113 traverse the membrane as a helical segment; the sequence is MMIWNSVFLGINILHLSYLLY. A required for interaction with CAV3 region spans residues 93–115; that stretch reads MMIWNSVFLGINILHLSYLLYKK. The Cytoplasmic segment spans residues 114 to 356; sequence KKRPVKIEKD…VPVSPAHQLP (243 aa). The tract at residues 136–186 is required for interaction with KCNK2; sequence RVPPDLFRRLTGQFCVIQTLKRGQVYATEDKTSVDDRLSILLKGRMKVSYR. Phosphoserine is present on residues serine 295 and serine 318. The segment covering 313 to 323 has biased composition (low complexity); sequence SSSTASLPMSS. Residues 313–356 form a disordered region; it reads SSSTASLPMSSPQQRASPKMKPIEEGLEDDDEVFVPVSPAHQLP.

It belongs to the popeye family. In terms of assembly, homodimer. Homodimerization requires the C-terminus cytoplasmic region. Interacts (via the C-terminus cytoplasmic tail) with TJP1. Interacts (via the C-terminus cytoplasmic tail) with ARHGEF25/GEFT (via the DH domain). Interacts (via the C-terminus cytoplasmic tail) with VAMP3. Interacts with KCNK2; the interaction enhances KCNK2 surface expression and is inhibited by cAMP. Interacts with CAV3. As to expression, strongly expressed in heart and skeletal muscle. Weakly expressed in brain, spleen, liver, kidney and lung.

The protein localises to the lateral cell membrane. Its subcellular location is the cell junction. It is found in the tight junction. It localises to the membrane. The protein resides in the cell membrane. The protein localises to the sarcolemma. Its subcellular location is the caveola. Cell adhesion molecule involved in the establishment and/or maintenance of cell integrity. Involved in the formation and regulation of the tight junction (TJ) paracellular permeability barrier in epithelial cells. Plays a role in VAMP3-mediated vesicular transport and recycling of different receptor molecules through its interaction with VAMP3. Plays a role in the regulation of cell shape and movement by modulating the Rho-family GTPase activity through its interaction with ARHGEF25/GEFT. Induces primordial adhesive contact and aggregation of epithelial cells in a Ca(2+)-independent manner. Important for skeletal muscle and heart development. Also involved in striated muscle regeneration and repair and in the regulation of cell spreading. Important for the maintenance of cardiac function. Plays a regulatory function in heart rate dynamics mediated, at least in part, through cAMP-binding and, probably, by increasing cell surface expression of the potassium channel KCNK2 and enhancing current density. Is a caveolae-associated protein important for the preservation of caveolae structural and functional integrity as well as for heart protection against ischemia injury. This is Popeye domain-containing protein 1 (Popdc1) from Rattus norvegicus (Rat).